The chain runs to 655 residues: Chaperone protein dnaK1 (655 aa).

Phosphothreonine; by autocatalysis is present on threonine 197.

Belongs to the heat shock protein 70 family.

Acts as a chaperone. The chain is Chaperone protein dnaK1 (dnaK1) from Synechococcus elongatus (strain ATCC 33912 / PCC 7942 / FACHB-805) (Anacystis nidulans R2).